Consider the following 150-residue polypeptide: UPF0506 protein SJCHGC02380 (150 aa).

Residues 1 to 18 form the signal peptide; it reads MNTCIQLLILCLVTVINS. N-linked (GlcNAc...) asparagine glycosylation is found at asparagine 20, asparagine 24, asparagine 36, asparagine 48, asparagine 52, and asparagine 110. 3 disulfide bridges follow: cysteine 116-cysteine 130, cysteine 123-cysteine 134, and cysteine 129-cysteine 139.

The protein belongs to the UPF0506 family.

The protein resides in the secreted. This Schistosoma japonicum (Blood fluke) protein is UPF0506 protein SJCHGC02380.